An 85-amino-acid chain; its full sequence is MKLFLLLVISASMLIDGLVNADGYIRGSNGCKVSCLLGNEGCNKECRAYGASYGYCWTWKLACWCQGLPDDKTWKSESNTCGGKK.

The N-terminal stretch at M1–A21 is a signal peptide. In terms of domain architecture, LCN-type CS-alpha/beta spans D22–G82. Intrachain disulfides connect C31/C81, C35/C56, C42/C63, and C46/C65. G82 carries the glycine amide modification.

Expressed by the venom gland.

The protein resides in the secreted. Its function is as follows. Shows anti-epileptic activity. Shares high homology with depressant insect toxins, but shows very weak toxicity against mammals and insects and no obvious symptoms on insect larvae. May target voltage-gated sodium channel (Nav). This Olivierus martensii (Manchurian scorpion) protein is Toxin BmKAEP.